We begin with the raw amino-acid sequence, 778 residues long: Protein SPT2 homolog (778 aa).

Disordered stretches follow at residues 1-21 (MDFHSVLKMAAAKPGSDGIAK), 50-625 (KKDE…AKPK), and 639-685 (VPKS…DDDD). The tract at residues 1–665 (MDFHSVLKMA…PGHRPAMRPP (665 aa)) is important for interaction with DNA. Positions 44 to 83 (VQAFLRKKDEESRRKETVEKRKKEDLLAKRKELKHDRKAR) form a coiled coil. Positions 50 to 78 (KKDEESRRKETVEKRKKEDLLAKRKELKH) are enriched in basic and acidic residues. Residues 114–135 (EEDQNDNMAAEGEEYMTEEELY) are compositionally biased toward acidic residues. The span at 153 to 167 (QKVPKPAPGKKPPTP) shows a compositional bias: pro residues. Basic and acidic residues predominate over residues 190–227 (RPVKKEERLRTAEELKELEFLERKAQKADRKDPKRNEQ). Positions 193–221 (KKEERLRTAEELKELEFLERKAQKADRKD) form a coiled coil. A compositionally biased stretch (polar residues) spans 242-269 (LKGTHSGNSKSSSTEQNGTIRKSSSDTG). Basic and acidic residues predominate over residues 270 to 286 (SRTEKSGSVFHTKESKK). The segment covering 312-335 (SSQPSAASNSAFGRPSGSARPSGS) has biased composition (low complexity). Composition is skewed to gly residues over residues 336–357 (SGPGRPLGGSGSSSGKSTGGSA) and 365–384 (GGSGSGSGKPMGGSGSGKPI). The span at 385 to 394 (GGLHSSHGSG) shows a compositional bias: low complexity. Over residues 395-417 (KPTGGTGSGSGKPTGASGSGSGK) the composition is skewed to gly residues. Low complexity-rich tracts occupy residues 418–493 (PTGS…SGSA) and 506–559 (GSGS…PSSS). The segment covering 588–604 (VRPNSTSVPGSARSSLG) has biased composition (polar residues). The segment covering 662 to 671 (MRPPGPPLPP) has biased composition (pro residues). Positions 666–778 (GPPLPPITSS…QLKAAKKMSR (113 aa)) are important for interaction with histones. The stretch at 735-778 (REQQKEEARSLRLGIQEDLEELQREEEELKRKAKQLKAAKKMSR) forms a coiled coil.

The protein belongs to the SPT2 family. As to quaternary structure, interacts with histones. Interacts with a heterotetrameric complex formed by histone H3 and H4, especially when the histone tetramer is not bound to DNA.

It localises to the nucleus. The protein localises to the nucleolus. Its function is as follows. Histone chaperone that stabilizes pre-existing histone tetramers and regulates replication-independent histone exchange on chromatin. Required for normal chromatin refolding in the coding region of transcribed genes, and for the suppression of spurious transcription. Binds DNA and histones and promotes nucleosome assembly (in vitro). Facilitates formation of tetrameric histone complexes containing histone H3 and H4. Modulates RNA polymerase 1-mediated transcription. Binds DNA, with a preference for branched DNA species, such as Y-form DNA and Holliday junction DNA. This is Protein SPT2 homolog (spty2d1) from Xenopus tropicalis (Western clawed frog).